The sequence spans 303 residues: Sulfate adenylyltransferase subunit 2 (303 aa).

The protein belongs to the PAPS reductase family. CysD subfamily. In terms of assembly, heterodimer composed of CysD, the smaller subunit, and CysN.

The enzyme catalyses sulfate + ATP + H(+) = adenosine 5'-phosphosulfate + diphosphate. It participates in sulfur metabolism; hydrogen sulfide biosynthesis; sulfite from sulfate: step 1/3. Functionally, with CysN forms the ATP sulfurylase (ATPS) that catalyzes the adenylation of sulfate producing adenosine 5'-phosphosulfate (APS) and diphosphate, the first enzymatic step in sulfur assimilation pathway. APS synthesis involves the formation of a high-energy phosphoric-sulfuric acid anhydride bond driven by GTP hydrolysis by CysN coupled to ATP hydrolysis by CysD. In Aliarcobacter butzleri (strain RM4018) (Arcobacter butzleri), this protein is Sulfate adenylyltransferase subunit 2.